A 107-amino-acid polypeptide reads, in one-letter code: Large ribosomal subunit protein eL33B (107 aa).

Ala2 is modified (N-acetylalanine; partial). Lys47 is covalently cross-linked (Glycyl lysine isopeptide (Lys-Gly) (interchain with G-Cter in ubiquitin)).

The protein belongs to the eukaryotic ribosomal protein eL33 family. In terms of assembly, component of the large ribosomal subunit (LSU). Mature yeast ribosomes consist of a small (40S) and a large (60S) subunit. The 40S small subunit contains 1 molecule of ribosomal RNA (18S rRNA) and 33 different proteins (encoded by 57 genes). The large 60S subunit contains 3 rRNA molecules (25S, 5.8S and 5S rRNA) and 46 different proteins (encoded by 81 genes). In terms of processing, N-terminally acetylated by acetyltransferase NatA.

The protein localises to the cytoplasm. Functionally, component of the ribosome, a large ribonucleoprotein complex responsible for the synthesis of proteins in the cell. The small ribosomal subunit (SSU) binds messenger RNAs (mRNAs) and translates the encoded message by selecting cognate aminoacyl-transfer RNA (tRNA) molecules. The large subunit (LSU) contains the ribosomal catalytic site termed the peptidyl transferase center (PTC), which catalyzes the formation of peptide bonds, thereby polymerizing the amino acids delivered by tRNAs into a polypeptide chain. The nascent polypeptides leave the ribosome through a tunnel in the LSU and interact with protein factors that function in enzymatic processing, targeting, and the membrane insertion of nascent chains at the exit of the ribosomal tunnel. This Saccharomyces cerevisiae (strain ATCC 204508 / S288c) (Baker's yeast) protein is Large ribosomal subunit protein eL33B.